A 340-amino-acid polypeptide reads, in one-letter code: L-threonine 3-dehydrogenase (340 aa).

Cysteine 38 is a Zn(2+) binding site. Active-site charge relay system residues include threonine 40 and histidine 43. 6 residues coordinate Zn(2+): histidine 63, glutamate 64, cysteine 93, cysteine 96, cysteine 99, and cysteine 107. Residues isoleucine 175, aspartate 195, arginine 200, 261–263, and 285–286 contribute to the NAD(+) site; these read LGI and IY.

The protein belongs to the zinc-containing alcohol dehydrogenase family. As to quaternary structure, homotetramer. Requires Zn(2+) as cofactor.

Its subcellular location is the cytoplasm. The catalysed reaction is L-threonine + NAD(+) = (2S)-2-amino-3-oxobutanoate + NADH + H(+). It functions in the pathway amino-acid degradation; L-threonine degradation via oxydo-reductase pathway; glycine from L-threonine: step 1/2. Catalyzes the NAD(+)-dependent oxidation of L-threonine to 2-amino-3-ketobutyrate. This Xanthomonas axonopodis pv. citri (strain 306) protein is L-threonine 3-dehydrogenase.